The primary structure comprises 337 residues: 1-aminocyclopropane-1-carboxylate deaminase (337 aa).

Residue Lys-50 is modified to N6-(pyridoxal phosphate)lysine. Ser-77 serves as the catalytic Nucleophile.

Belongs to the ACC deaminase/D-cysteine desulfhydrase family. Homotrimer. Pyridoxal 5'-phosphate is required as a cofactor.

It catalyses the reaction 1-aminocyclopropane-1-carboxylate + H2O = 2-oxobutanoate + NH4(+). Functionally, catalyzes a cyclopropane ring-opening reaction, the irreversible conversion of 1-aminocyclopropane-1-carboxylate (ACC) to ammonia and alpha-ketobutyrate. Allows growth on ACC as a nitrogen source. This is 1-aminocyclopropane-1-carboxylate deaminase from Bradyrhizobium diazoefficiens (strain JCM 10833 / BCRC 13528 / IAM 13628 / NBRC 14792 / USDA 110).